Here is a 108-residue protein sequence, read N- to C-terminus: Large ribosomal subunit protein uL24 (108 aa).

This sequence belongs to the universal ribosomal protein uL24 family. In terms of assembly, part of the 50S ribosomal subunit.

One of two assembly initiator proteins, it binds directly to the 5'-end of the 23S rRNA, where it nucleates assembly of the 50S subunit. In terms of biological role, one of the proteins that surrounds the polypeptide exit tunnel on the outside of the subunit. The chain is Large ribosomal subunit protein uL24 from Geobacter metallireducens (strain ATCC 53774 / DSM 7210 / GS-15).